The sequence spans 279 residues: DegV domain-containing protein CPE1310 (279 aa).

The region spanning Ile4–Glu277 is the DegV domain. Hexadecanoate contacts are provided by Thr62 and Ser94.

Functionally, may bind long-chain fatty acids, such as palmitate, and may play a role in lipid transport or fatty acid metabolism. The chain is DegV domain-containing protein CPE1310 from Clostridium perfringens (strain 13 / Type A).